The primary structure comprises 188 residues: Elongation factor P-like protein (188 aa).

The protein belongs to the elongation factor P family.

The sequence is that of Elongation factor P-like protein from Vibrio parahaemolyticus serotype O3:K6 (strain RIMD 2210633).